Consider the following 293-residue polypeptide: MYYPQPTVSLAAAVALLRPSLRRHSQRASSLLRSSTPPPWVSARRRTAVSDDFFTVELDATGVEPEPDSIDDGLPSPWEGAVVYRRDAAVQHLEYASTLERLGLGDLSSPDSRARAADLGLAGGTLDSTGAQPRTPVLVSVDVTRRRGRLRLDGIVRTVITLGCFRCAEPAPQGIFANFSLLLTEDPVEEEPDLGTIFQEDDDKGGASLACAMDGDQDIDWDDRLHFPAADKEIDISKHIRDMIHLEITLDAVCNPNCKGLCLTCGANLNTTSSCTCKPRNVQGLSPLKGVFK.

A chloroplast-targeting transit peptide spans 1-42 (MYYPQPTVSLAAAVALLRPSLRRHSQRASSLLRSSTPPPWVS).

Belongs to the DUF177 domain family. As to expression, highly expressed in shoots and leaves. Detected in roots, embryos and endosperm.

It localises to the plastid. The protein resides in the chloroplast. In terms of biological role, plays a role in synthesis, processing and/or stability of 23S rRNA. Required for embryogenesis. May be involved in RPL23 transcript levels regulation in non-photosynthetic plastids. This chain is Large ribosomal RNA subunit accumulation protein YCED homolog 1, chloroplastic, found in Zea mays (Maize).